The chain runs to 215 residues: MRRVLYFTNTRPDAYATMSDPIRLIVGLGNPGPDYETTRHNAGFWLADHLADDLRTAFALEKGFFGMLAKARHAGENVVLLKPITYMNRSGQSVGAVARFYKLAPEQVLVLHDELDLLPGQVKIKQGGGHAGHNGLKDIQAALGSPNFWRLRIGIGHPRSLGLAQQVADFVLHPPRREEQQQIDTVIDRCRAVVPAMLAGDFALATRELHGANGA.

Tyrosine 35 provides a ligand contact to tRNA. Residue histidine 40 is the Proton acceptor of the active site. Residues tyrosine 86, asparagine 88, and asparagine 134 each coordinate tRNA.

This sequence belongs to the PTH family. As to quaternary structure, monomer.

The protein resides in the cytoplasm. It catalyses the reaction an N-acyl-L-alpha-aminoacyl-tRNA + H2O = an N-acyl-L-amino acid + a tRNA + H(+). In terms of biological role, hydrolyzes ribosome-free peptidyl-tRNAs (with 1 or more amino acids incorporated), which drop off the ribosome during protein synthesis, or as a result of ribosome stalling. Catalyzes the release of premature peptidyl moieties from peptidyl-tRNA molecules trapped in stalled 50S ribosomal subunits, and thus maintains levels of free tRNAs and 50S ribosomes. This chain is Peptidyl-tRNA hydrolase, found in Bordetella parapertussis (strain 12822 / ATCC BAA-587 / NCTC 13253).